A 533-amino-acid chain; its full sequence is Adenosine deaminase (533 aa).

Positions 1–19 (MKILLAVVFVLNLTNLAVP) are cleaved as a signal peptide.

The protein belongs to the metallo-dependent hydrolases superfamily. Adenosine and AMP deaminases family. ADGF subfamily. Zn(2+) serves as cofactor. Post-translationally, proteolytically cleaved by human mast cell tryptase and chymase. Female salivary gland (at protein level).

It is found in the secreted. The enzyme catalyses adenosine + H2O + H(+) = inosine + NH4(+). The catalysed reaction is 2'-deoxyadenosine + H2O + H(+) = 2'-deoxyinosine + NH4(+). Functionally, catalyzes the deamination of adenosine to inosine and deoxyadenosine to deoxyinosine. Induces degranulation of host mast cells, and secretion of tryptase and IL6. Modulates enzymatic activities of human tryptase and chymase. Induces release of cytokines, such as IL1B, IL6, TNF, CCL2, IFN-beta (INFB1) and ISG15, from host monocytes and macrophages. Activates host NF-kappa-B signaling pathway in TAK1/MAP3K7-dependent manner. Its function is as follows. (Microbial infection) Promotes replication of dengue virus type 2 in host cells probably via modulation of cytokine production in host macrophages and monocytes. The polypeptide is Adenosine deaminase (Aedes albopictus (Asian tiger mosquito)).